The sequence spans 195 residues: MNSVHQRRTPFSIADILGPSMVPEAPSAPQLPEAGPDPASPLCALEELASKTFLGHSPRATPQPSEGRAAPEAPPGPGAGVRRRRKSRTAFTAQQVLELERRFVFQKYLAPSERDGLAARLGLANAQVVTWFQNRRAKLKRDVEEMRADVASLCGLSPGVLCYPALPDSTSSPDPGPSGPDSEPNLSDEEIQVDD.

Disordered regions lie at residues 1–89 and 164–195; these read MNSV…KSRT and PALPDSTSSPDPGPSGPDSEPNLSDEEIQVDD. The segment at residues 84 to 143 is a DNA-binding region (homeobox); that stretch reads RRKSRTAFTAQQVLELERRFVFQKYLAPSERDGLAARLGLANAQVVTWFQNRRAKLKRDV. Over residues 186-195 the composition is skewed to acidic residues; the sequence is LSDEEIQVDD.

As to expression, expressed in the developing urogenital system, eye and brain.

Its subcellular location is the nucleus. Functionally, transcription factor. In Mus musculus (Mouse), this protein is Transcription factor LBX2 (Lbx2).